A 130-amino-acid chain; its full sequence is Type VII secretion system extracellular protein C (130 aa).

This sequence belongs to the EsxC family. Forms both homodimers and heterodimers with EsxA. Homodimerization is calcium-dependent.

It is found in the secreted. Its function is as follows. Implements its pathogenic function during infection. The protein is Type VII secretion system extracellular protein C of Staphylococcus aureus (strain Mu50 / ATCC 700699).